The chain runs to 236 residues: GTP cyclohydrolase 1 (236 aa).

Residues 1-52 form a disordered region; it reads MAAARSCNGYARREGPPSPKLGTEKPRVSAGSGGSGDGWRGERPRSEEDNEL. Cys-127, His-130, and Cys-198 together coordinate Zn(2+).

The protein belongs to the GTP cyclohydrolase I family. As to quaternary structure, toroid-shaped homodecamer, composed of two pentamers of five dimers.

The protein resides in the cytoplasm. The protein localises to the nucleus. The catalysed reaction is GTP + H2O = 7,8-dihydroneopterin 3'-triphosphate + formate + H(+). The protein operates within cofactor biosynthesis; 7,8-dihydroneopterin triphosphate biosynthesis; 7,8-dihydroneopterin triphosphate from GTP: step 1/1. Its activity is regulated as follows. GTP shows a positive allosteric effect, and tetrahydrobiopterin inhibits the enzyme activity. Zinc is required for catalytic activity. Inhibited by Mg(2+). May positively regulate nitric oxide synthesis in endothelial cells. May be involved in dopamine synthesis. May modify pain sensitivity and persistence. The polypeptide is GTP cyclohydrolase 1 (GCH1) (Gallus gallus (Chicken)).